The following is a 132-amino-acid chain: uncharacterized protein (132 aa).

2 disordered regions span residues 36–69 (GLAS…PNIS) and 97–132 (QIND…PTAR). The residue at position 101 (Ser101) is a Phosphoserine.

As to quaternary structure, copurifies with proteins HOL1, MMP1, PEX7 and PLB1.

This is an uncharacterized protein from Saccharomyces cerevisiae (strain ATCC 204508 / S288c) (Baker's yeast).